The primary structure comprises 342 residues: Succinylglutamate desuccinylase (342 aa).

3 residues coordinate Zn(2+): H63, E66, and H155. The active site involves E219.

This sequence belongs to the AspA/AstE family. Succinylglutamate desuccinylase subfamily. The cofactor is Zn(2+).

It catalyses the reaction N-succinyl-L-glutamate + H2O = L-glutamate + succinate. It functions in the pathway amino-acid degradation; L-arginine degradation via AST pathway; L-glutamate and succinate from L-arginine: step 5/5. Its function is as follows. Transforms N(2)-succinylglutamate into succinate and glutamate. In Vibrio cholerae serotype O1 (strain ATCC 39541 / Classical Ogawa 395 / O395), this protein is Succinylglutamate desuccinylase.